A 336-amino-acid chain; its full sequence is PHD finger protein 11 (336 aa).

Positions 1-20 (MAEETAPPCGPVSTGGSLSP) are disordered. The C2HC pre-PHD-type zinc finger occupies 25-61 (KRTCALCPDGHEWSVIYFAPSANIAAHENCLLYSSGL). The PHD-type zinc-finger motif lies at 91 to 143 (LKCSLCNKGGATVGCDLSSCRKSYHYVCAKKDHAIPQVDEDLGTYKIFCPEHP). Disordered regions lie at residues 139–179 (CPEH…KKMK) and 303–336 (DPSG…GDSL). The segment covering 303-314 (DPSGSTSGSLLP) has biased composition (low complexity).

As to quaternary structure, interacts with BRCA1 and RELA.

It is found in the nucleus. Functionally, positive regulator of Th1-type cytokine gene expression. This Rattus norvegicus (Rat) protein is PHD finger protein 11 (Phf11).